The primary structure comprises 136 residues: Piercer of microtubule wall 1 protein (136 aa).

The interval 1-24 (MAEECPRACAEPVAPKATAPPERT) is disordered.

This sequence belongs to the PIERCE1 family. As to quaternary structure, microtubule inner protein component of sperm flagellar doublet microtubules. Interacts with CFAP53, ODAD1 and ODAD3; the interactions link the outer dynein arms docking complex (ODA-DC) to the internal microtubule inner proteins (MIP) in cilium axoneme. In terms of tissue distribution, expressed in airway epithelial cells.

Its subcellular location is the cytoplasm. It localises to the cytoskeleton. It is found in the cilium axoneme. The protein localises to the flagellum axoneme. Microtubule inner protein involved in the attachment of outer dynein arms (ODAs) to dynein-decorated doublet microtubules (DMTs) in cilia axoneme, which is required for motile cilia beating. Functions at the initial step of left-right asymmetry specification of the visceral organs. The sequence is that of Piercer of microtubule wall 1 protein from Homo sapiens (Human).